Reading from the N-terminus, the 85-residue chain is Large ribosomal subunit protein bL27 (85 aa).

Residues 1 to 21 (MAHKKAGGSTRNGRDSRGKRL) form a disordered region.

The protein belongs to the bacterial ribosomal protein bL27 family.

The chain is Large ribosomal subunit protein bL27 from Blochmanniella floridana.